Consider the following 303-residue polypeptide: NmrA-like family domain-containing oxidoreductase FVEG_08287 (303 aa).

NADP(+)-binding positions include 8-13 (LGAGEL), 8-14 (LGAGELG), 36-39 (LRPS), Arg-37, 56-57 (QG), 77-79 (IFR), and 159-162 (FMSF).

It belongs to the NmrA-type oxidoreductase family.

In terms of biological role, nmrA-like family domain-containing oxidoreductase; part of the Fusarium detoxification of benzoxazolinone cluster 1 (FDB1) involved in the degradation of benzoxazolinones produced by the host plant. Maize, wheat, and rye produce the 2 benzoxazinone phytoanticipins 2,4-dihy-droxy-7-methoxy-1,4-benzoxazin-3-one (DIMBOA) and 2,4-dihydroxy-1,4-benzoxazin-3-one (DIBOA) that, due to their inherent instability once released, spontaneously degrade to the more stable corresponding benzoxazolinones, 6-methoxy-2-benzoxazolinone (MBOA) and 2-benzoxazolinone (BOA), respectively. The first step in the detoxification of benzoxazolinones involves the hydrolysis of the cyclic ester bond of benzoxazolinones by the FDB1 cluster gamma-lactamase MBL1 to aminophenols. MBL1 is able to convert BOA into 2-aminophenol (2-AP), as well as MBOA into 5-methoxy-2-aminophenol (2-AMP). The FDB2 cluster N-malonyltransferase FDB2/NAT1 then metabolizes aminophenols via N-malonylation to non-toxic malonamic acids. FDB2/NAT1 converts 2-AP into N-(2-hydroxyphenyl) malonamic acid (HPMA) and 2-AMP into N-(2-hydroxy-4-methoxyphenyl) malonamic acid (HMPMA). The duplicated dienlactone hydrolases DLH1 and DLH2 may provide redundant function for hydrolyzing the lactone moiety in the BOA molecule. The roles of the amidases an other enzymes encoded by the 2 FDB clusters have not been identified so far. The sequence is that of NmrA-like family domain-containing oxidoreductase FVEG_08287 from Gibberella moniliformis (strain M3125 / FGSC 7600) (Maize ear and stalk rot fungus).